The primary structure comprises 131 residues: Small ribosomal subunit protein uS8 (131 aa).

The protein belongs to the universal ribosomal protein uS8 family. Part of the 30S ribosomal subunit. Contacts proteins S5 and S12.

One of the primary rRNA binding proteins, it binds directly to 16S rRNA central domain where it helps coordinate assembly of the platform of the 30S subunit. This is Small ribosomal subunit protein uS8 from Leptothrix cholodnii (strain ATCC 51168 / LMG 8142 / SP-6) (Leptothrix discophora (strain SP-6)).